The chain runs to 189 residues: Peptidyl-tRNA hydrolase (189 aa).

Residue Tyr-15 coordinates tRNA. The Proton acceptor role is filled by His-20. TRNA contacts are provided by Phe-66, Asn-68, and Asn-114.

The protein belongs to the PTH family. Monomer.

It is found in the cytoplasm. The enzyme catalyses an N-acyl-L-alpha-aminoacyl-tRNA + H2O = an N-acyl-L-amino acid + a tRNA + H(+). Functionally, hydrolyzes ribosome-free peptidyl-tRNAs (with 1 or more amino acids incorporated), which drop off the ribosome during protein synthesis, or as a result of ribosome stalling. Its function is as follows. Catalyzes the release of premature peptidyl moieties from peptidyl-tRNA molecules trapped in stalled 50S ribosomal subunits, and thus maintains levels of free tRNAs and 50S ribosomes. This Streptococcus equi subsp. zooepidemicus (strain H70) protein is Peptidyl-tRNA hydrolase.